A 117-amino-acid polypeptide reads, in one-letter code: MDMRAPAQVFGFLLLWFPGARCDIQMTQSPSSLSASLGERVSLTCRASQDIHGYLNLFQQKPGETIKHLIYETSNLDSGVPKRFSGSRSGSDYSLIIGSLESEDFADYYCLQYASSP.

The N-terminal stretch at 1-22 (MDMRAPAQVFGFLLLWFPGARC) is a signal peptide. A framework-1 region spans residues 23–45 (DIQMTQSPSSLSASLGERVSLTC). Cys-45 and Cys-110 are oxidised to a cystine. The tract at residues 46 to 56 (RASQDIHGYLN) is complementarity-determining-1. Residues 57 to 71 (LFQQKPGETIKHLIY) form a framework-2 region. The complementarity-determining-2 stretch occupies residues 72–78 (ETSNLDS). A framework-3 region spans residues 79 to 110 (GVPKRFSGSRSGSDYSLIIGSLESEDFADYYC). Positions 111–117 (LQYASSP) are complementarity-determining-3.

The polypeptide is Immunoglobulin kappa variable 9-129 (Mus musculus (Mouse)).